A 236-amino-acid chain; its full sequence is Ribose-5-phosphate isomerase A (236 aa).

Substrate-binding positions include 31–34 (TGST), 84–87 (DGAD), and 97–100 (KGGG). The Proton acceptor role is filled by Glu106. Lys124 serves as a coordination point for substrate.

The protein belongs to the ribose 5-phosphate isomerase family. Homodimer.

The catalysed reaction is aldehydo-D-ribose 5-phosphate = D-ribulose 5-phosphate. It participates in carbohydrate degradation; pentose phosphate pathway; D-ribose 5-phosphate from D-ribulose 5-phosphate (non-oxidative stage): step 1/1. Its function is as follows. Catalyzes the reversible conversion of ribose-5-phosphate to ribulose 5-phosphate. This chain is Ribose-5-phosphate isomerase A, found in Polynucleobacter asymbioticus (strain DSM 18221 / CIP 109841 / QLW-P1DMWA-1) (Polynucleobacter necessarius subsp. asymbioticus).